A 1066-amino-acid polypeptide reads, in one-letter code: TBC1 domain family member 31 (1066 aa).

WD repeat units lie at residues 33–74 (HNTS…LHGN), 75–116 (RFNL…TVTK), 117–157 (ELVS…LDTF), 158–200 (QRKR…CDTL), 201–248 (FCKY…ARQL), 249–296 (FRII…MQTC), and 297–334 (KLLF…NIYS). The 176-residue stretch at 424–599 (EYPTKYRMFI…KLFDNIFSNH (176 aa)) folds into the Rab-GAP TBC domain. Coiled-coil stretches lie at residues 728 to 861 (QKQE…DLEE) and 914 to 948 (NKCY…KWKE). The span at 989 to 998 (CHKEEPRFQN) shows a compositional bias: basic and acidic residues. A disordered region spans residues 989 to 1020 (CHKEEPRFQNEQDSSCLPRTSQLNDSSEMDPS). Positions 999-1020 (EQDSSCLPRTSQLNDSSEMDPS) are enriched in polar residues. Positions 1053-1056 (RARH) are mediates direct interaction with PJA2.

As to quaternary structure, interacts with PJA2; the interaction is direct and recruits PJA2 to centrosomes. Interacts with OFD1; regulates its activity in cilium assembly. Interacts with PRKACA.

Its subcellular location is the cytoplasm. The protein resides in the cytoskeleton. The protein localises to the microtubule organizing center. It localises to the centrosome. It is found in the centriolar satellite. Its subcellular location is the cilium basal body. Its function is as follows. Molecular adapter which is involved in cilium biogenesis. Part of a functional complex including OFD1 a centriolar protein involved in cilium assembly. Could regulate the cAMP-dependent phosphorylation of OFD1, and its subsequent ubiquitination by PJA2 which ultimately leads to its proteasomal degradation. The polypeptide is TBC1 domain family member 31 (Homo sapiens (Human)).